The sequence spans 169 residues: Calfumirin-1 (169 aa).

EF-hand domains lie at Asn6–Phe41, Asn42–Leu77, Glu93–Lys128, and Asp129–Leu164. Ca(2+) is bound by residues Asp19, Asn21, Asp23, Glu25, Glu30, Asp55, Asp57, Asp59, Lys61, Glu66, Asp108, Asn110, Asp112, Glu117, Asp142, Asn144, Asp146, Thr148, and Glu153.

In terms of biological role, may be involved in the phase-shift of cells from growth to differentiation. This chain is Calfumirin-1 (cafA), found in Dictyostelium discoideum (Social amoeba).